The following is a 170-amino-acid chain: Viral interleukin-10 homolog (170 aa).

The signal sequence occupies residues 1 to 23 (MERRLVVTLQCLVLLYLAPECGG). 2 disulfides stabilise this stretch: C27-C119 and C73-C125. Residues 97-145 (EAKDHVNSLGENLKTLRLRLRRCHRFLPCENKSKAVEQIKNAFNKLQEK) are a coiled coil. Residue N127 is glycosylated (N-linked (GlcNAc...) asparagine; by host).

The protein belongs to the IL-10 family. As to quaternary structure, homodimer.

It localises to the secreted. In terms of biological role, inhibits IFN-gamma synthesis. Down-regulates the expression of the host TAP1 gene (transporter associated with antigen processing), thereby affecting the transport of peptides into the endoplasmic reticulum and subsequent peptide loading by MHC class I molecules. In consequence, infected cells are masked for immune recognition by cytotoxic T-lymphocytes. The polypeptide is Viral interleukin-10 homolog (Epstein-Barr virus (strain AG876) (HHV-4)).